Here is a 134-residue protein sequence, read N- to C-terminus: MDEEYIALLDRAYKLVAPKAQRRAEIPKIEVQNMPRKTVIPNFGQIAKRLNRDIYFMAKFFQRELAVPGTVEGDVFTLHGEKSPKVVEAVYERFIRYYVVCPVCNSIDTELRREGRIYVMRCLACGASTPVKPL.

Belongs to the eIF-2-beta/eIF-5 family. As to quaternary structure, heterotrimer composed of an alpha, a beta and a gamma chain.

Its function is as follows. eIF-2 functions in the early steps of protein synthesis by forming a ternary complex with GTP and initiator tRNA. This chain is Translation initiation factor 2 subunit beta, found in Pyrobaculum neutrophilum (strain DSM 2338 / JCM 9278 / NBRC 100436 / V24Sta) (Thermoproteus neutrophilus).